We begin with the raw amino-acid sequence, 619 residues long: Dihydroxy-acid dehydratase 1 (619 aa).

Residue Asp-81 coordinates Mg(2+). Cys-122 contributes to the [2Fe-2S] cluster binding site. Positions 123 and 124 each coordinate Mg(2+). The residue at position 124 (Lys-124) is an N6-carboxylysine. Cys-201 provides a ligand contact to [2Fe-2S] cluster. Glu-496 is a Mg(2+) binding site. Catalysis depends on Ser-522, which acts as the Proton acceptor.

Belongs to the IlvD/Edd family. Homodimer. It depends on [2Fe-2S] cluster as a cofactor. The cofactor is Mg(2+).

The catalysed reaction is (2R)-2,3-dihydroxy-3-methylbutanoate = 3-methyl-2-oxobutanoate + H2O. It carries out the reaction (2R,3R)-2,3-dihydroxy-3-methylpentanoate = (S)-3-methyl-2-oxopentanoate + H2O. Its pathway is amino-acid biosynthesis; L-isoleucine biosynthesis; L-isoleucine from 2-oxobutanoate: step 3/4. The protein operates within amino-acid biosynthesis; L-valine biosynthesis; L-valine from pyruvate: step 3/4. Its function is as follows. Functions in the biosynthesis of branched-chain amino acids. Catalyzes the dehydration of (2R,3R)-2,3-dihydroxy-3-methylpentanoate (2,3-dihydroxy-3-methylvalerate) into 2-oxo-3-methylpentanoate (2-oxo-3-methylvalerate) and of (2R)-2,3-dihydroxy-3-methylbutanoate (2,3-dihydroxyisovalerate) into 2-oxo-3-methylbutanoate (2-oxoisovalerate), the penultimate precursor to L-isoleucine and L-valine, respectively. The polypeptide is Dihydroxy-acid dehydratase 1 (Burkholderia lata (strain ATCC 17760 / DSM 23089 / LMG 22485 / NCIMB 9086 / R18194 / 383)).